We begin with the raw amino-acid sequence, 490 residues long: MSNANNNQPENVSLNAFKQPRAFYLIFSIELWERFGYYGLQGIMAVYLVKMLGMTEADSITLFSSFSALVYGFVAIGGWLGDKVLGAKRVIMLGALVLAIGYAFVAYSGHDLSLVYVGMATIAVGNGLFKANPSSLLSTCYEKNDPRLDGAFTMYYMSVNIGSFFSMLATPWLAARFGWSVAFSLSVVGMLITLVNFMMCRRWVKDQGSKPDFAPLQVGKLMMTLVGVVILVAISTWLLHNQTIARWALAIISAGIILIFAKETFALQGGARRKMIVAFLLMLEAVVFFVLYSQMPTSLNFFAIHNVEHSIFGIAFEPEQYQALNPFWIMVASPILAAIYNKMGDRLPMPHKFAIGMVLCSGAFLVLPWGASFANEAGIVSVNWLILSYALQSIGELMISGLGLAMVAQLVPQRLMGFIMGSWFLTTAAAALIAGKVAALTAVPGGEVADPHASLAIYSHVFMQIGLATAVIAVLMLLTAPKLNRMTLGD.

At 1-34 (MSNANNNQPENVSLNAFKQPRAFYLIFSIELWER) the chain is on the cytoplasmic side. The chain crosses the membrane as a helical span at residues 35-55 (FGYYGLQGIMAVYLVKMLGMT). Residues 56 to 59 (EADS) lie on the Periplasmic side of the membrane. The chain crosses the membrane as a helical span at residues 60–80 (ITLFSSFSALVYGFVAIGGWL). The Cytoplasmic portion of the chain corresponds to 81–89 (GDKVLGAKR). A helical transmembrane segment spans residues 90 to 110 (VIMLGALVLAIGYAFVAYSGH). Asp-111 is a topological domain (periplasmic). The chain crosses the membrane as a helical span at residues 112 to 132 (LSLVYVGMATIAVGNGLFKAN). At 133–153 (PSSLLSTCYEKNDPRLDGAFT) the chain is on the cytoplasmic side. The helical transmembrane segment at 154 to 174 (MYYMSVNIGSFFSMLATPWLA) threads the bilayer. Residues 175-176 (AR) lie on the Periplasmic side of the membrane. The helical transmembrane segment at 177–197 (FGWSVAFSLSVVGMLITLVNF) threads the bilayer. Topologically, residues 198 to 217 (MMCRRWVKDQGSKPDFAPLQ) are cytoplasmic. Residues 218–238 (VGKLMMTLVGVVILVAISTWL) traverse the membrane as a helical segment. The Periplasmic segment spans residues 239 to 246 (LHNQTIAR). A helical membrane pass occupies residues 247 to 267 (WALAIISAGIILIFAKETFAL). Residues 268 to 274 (QGGARRK) lie on the Cytoplasmic side of the membrane. A helical membrane pass occupies residues 275–295 (MIVAFLLMLEAVVFFVLYSQM). The Periplasmic segment spans residues 296–320 (PTSLNFFAIHNVEHSIFGIAFEPEQ). Residues 321 to 341 (YQALNPFWIMVASPILAAIYN) form a helical membrane-spanning segment. The Cytoplasmic portion of the chain corresponds to 342–352 (KMGDRLPMPHK). Residues 353-373 (FAIGMVLCSGAFLVLPWGASF) traverse the membrane as a helical segment. Residues 374 to 383 (ANEAGIVSVN) are Periplasmic-facing. A helical membrane pass occupies residues 384 to 404 (WLILSYALQSIGELMISGLGL). The Cytoplasmic portion of the chain corresponds to 405–414 (AMVAQLVPQR). Residues 415-435 (LMGFIMGSWFLTTAAAALIAG) form a helical membrane-spanning segment. The Periplasmic portion of the chain corresponds to 436–460 (KVAALTAVPGGEVADPHASLAIYSH). The chain crosses the membrane as a helical span at residues 461-481 (VFMQIGLATAVIAVLMLLTAP). The Cytoplasmic segment spans residues 482–490 (KLNRMTLGD).

Belongs to the major facilitator superfamily. Proton-dependent oligopeptide transporter (POT/PTR) (TC 2.A.17) family. DtpA subfamily.

The protein resides in the cell inner membrane. In terms of biological role, proton-dependent permease that transports di- and tripeptides. This Edwardsiella piscicida protein is Dipeptide and tripeptide permease A.